Here is a 450-residue protein sequence, read N- to C-terminus: MKRRYFGTDGIRGQSNVFPMTPDLAMRVGIAAGTIFRRGNHRHRVVIGKDTRLSGYMLENAMVAGFTAAGLDAFILGPIPTPAVAMLTRSLRCDIGVMISASHNPYEDNGIKLFGPDGYKLSDDIEAEIEDLLEKDLNAQLAKSDDIGRAKRVDGVHDRYIEHAKRTLPRDVTLQGLRVAIDCANGAAYKVAPAVLWELGADVVTIGNEPNGTNINLNCGSTSPVALQKKVDEVRADIGIALDGDADRVIIIDENGSIVDGDQLMAVIAESWAESQQLRGNGIVATVMSNLGLERFLDERGMALARTKVGDRYVVEHMRQHNYNVGGEQSGHIVLSDYGTTGDGLVAALQILAAVKRTGRTVSEVCRRFEPVPQLLRNVRISGGKPLEDIQVQKAIADAEAELARNGRLVIRPSGTEPLIRVMAEGDDRAQIERIVNELIGTISNVRTAA.

Ser102 functions as the Phosphoserine intermediate in the catalytic mechanism. 4 residues coordinate Mg(2+): Ser102, Asp243, Asp245, and Asp247. Ser102 carries the phosphoserine modification.

It belongs to the phosphohexose mutase family. The cofactor is Mg(2+). Post-translationally, activated by phosphorylation.

It carries out the reaction alpha-D-glucosamine 1-phosphate = D-glucosamine 6-phosphate. In terms of biological role, catalyzes the conversion of glucosamine-6-phosphate to glucosamine-1-phosphate. The polypeptide is Phosphoglucosamine mutase (Rhizobium etli (strain ATCC 51251 / DSM 11541 / JCM 21823 / NBRC 15573 / CFN 42)).